The primary structure comprises 582 residues: Adenine deaminase (582 aa).

Belongs to the metallo-dependent hydrolases superfamily. Adenine deaminase family. Mn(2+) serves as cofactor.

It carries out the reaction adenine + H2O + H(+) = hypoxanthine + NH4(+). This chain is Adenine deaminase, found in Oceanobacillus iheyensis (strain DSM 14371 / CIP 107618 / JCM 11309 / KCTC 3954 / HTE831).